The chain runs to 294 residues: Probable 2-(5''-triphosphoribosyl)-3'-dephosphocoenzyme-A synthase (294 aa).

The protein belongs to the CitG/MdcB family.

The enzyme catalyses 3'-dephospho-CoA + ATP = 2'-(5''-triphospho-alpha-D-ribosyl)-3'-dephospho-CoA + adenine. The protein is Probable 2-(5''-triphosphoribosyl)-3'-dephosphocoenzyme-A synthase of Streptococcus equi subsp. equi (strain 4047).